The sequence spans 360 residues: Zinc metalloproteinase nas-5 (360 aa).

An N-terminal signal peptide occupies residues 1–21 (MDIKQLLLSIILTVSVVNGRG). The region spanning 61–269 (NALLSNSPLR…KKVCAIYHCS (209 aa)) is the Peptidase M12A domain. Residue Asn-108 is glycosylated (N-linked (GlcNAc...) asparagine). 2 cysteine pairs are disulfide-bonded: Cys-111–Cys-268 and Cys-134–Cys-157. His-165 lines the Zn(2+) pocket. Glu-166 is an active-site residue. 2 residues coordinate Zn(2+): His-169 and His-175. Residues 299–336 (QGDSCTDRLGICPMLKSREMLNCKVMATFCCSSCSAPT) enclose the PLAC domain.

It depends on Zn(2+) as a cofactor.

The protein localises to the secreted. Functionally, metalloprotease. The polypeptide is Zinc metalloproteinase nas-5 (nas-5) (Caenorhabditis elegans).